We begin with the raw amino-acid sequence, 170 residues long: MNGFSHFNEEGRARMVDISDKSSTVRTAAAISSVHMKHDVYSRIKNREIGKGDVLAVAQVAGIMAAKQTSAIIPMCHPLSLSSVDISFGWEEKDSEAVLHIQASVKTKGSTGVEMEALTSASVCALTVYDMCKALDKGMVIGPTCLMEKTGGKNGDFKRDASEYKVEDQS.

Residues M75–H77 and M115–E116 contribute to the substrate site. D130 is an active-site residue.

Belongs to the MoaC family. In terms of assembly, homohexamer; trimer of dimers.

The catalysed reaction is (8S)-3',8-cyclo-7,8-dihydroguanosine 5'-triphosphate = cyclic pyranopterin phosphate + diphosphate. It participates in cofactor biosynthesis; molybdopterin biosynthesis. Catalyzes the conversion of (8S)-3',8-cyclo-7,8-dihydroguanosine 5'-triphosphate to cyclic pyranopterin monophosphate (cPMP). The chain is Cyclic pyranopterin monophosphate synthase from Bacillus velezensis (strain DSM 23117 / BGSC 10A6 / LMG 26770 / FZB42) (Bacillus amyloliquefaciens subsp. plantarum).